A 375-amino-acid polypeptide reads, in one-letter code: Metal tolerance protein B (375 aa).

The Cytoplasmic portion of the chain corresponds to 1–57; the sequence is MELEQICILKPDDEEEMESPSPSKTEENLGVVPLSCAFTRQEHCVSETKEREESTRR. A helical transmembrane segment spans residues 58–78; the sequence is LSSLIFLYLIVMSVQIVGGFK. The Vacuolar portion of the chain corresponds to 79–84; the sequence is ANSLAV. A helical transmembrane segment spans residues 85-105; that stretch reads MTDAAHLLSDVAGLCVSLLAI. The Cytoplasmic segment spans residues 106–122; that stretch reads KVSSWEANPRNSFGFKR. A helical transmembrane segment spans residues 123 to 143; it reads LEVLAAFLSVQLIWLVSGVII. At 144–160 the chain is on the vacuolar side; the sequence is HEAIQRLLSRSREVNGE. The helical transmembrane segment at 161 to 181 threads the bilayer; the sequence is IMFGISAFGFFMNLVMVLWLG. The required for zinc-binding stretch occupies residues 182 to 206; the sequence is HNHSHHHHDHHHHHHNHKHQHQHHH. The Cytoplasmic portion of the chain corresponds to 182–240; that stretch reads HNHSHHHHDHHHHHHNHKHQHQHHHKEVVAEEEEEEMNPLKGEKSSSKEMNINIQGAYL. A helical membrane pass occupies residues 241–261; that stretch reads HAMADMIQSLGVMIGGGIIWV. The Vacuolar portion of the chain corresponds to 262–264; the sequence is KPK. The chain crosses the membrane as a helical span at residues 265–285; that stretch reads WVLVDLICTLVFSAFALAATL. Residues 286-375 lie on the Cytoplasmic side of the membrane; sequence PILKNIFGIL…YHATVQVESE (90 aa).

The protein belongs to the cation diffusion facilitator (CDF) transporter (TC 2.A.4) family. SLC30A subfamily.

The protein resides in the vacuole membrane. In terms of biological role, involved in sequestration of excess zinc in the cytoplasm into vacuoles to maintain zinc homeostasis. The protein is Metal tolerance protein B (MTPB) of Arabidopsis thaliana (Mouse-ear cress).